Reading from the N-terminus, the 244-residue chain is Lactate utilization protein A (244 aa).

Belongs to the LutA/YkgE family.

In terms of biological role, is involved in L-lactate degradation and allows cells to grow with lactate as the sole carbon source. In Halalkalibacterium halodurans (strain ATCC BAA-125 / DSM 18197 / FERM 7344 / JCM 9153 / C-125) (Bacillus halodurans), this protein is Lactate utilization protein A.